We begin with the raw amino-acid sequence, 151 residues long: Cytochrome c oxidase subunit 5B, mitochondrial (151 aa).

A mitochondrion-targeting transit peptide spans 1–17 (MLRTSLTKGARLTGTRF). The Mitochondrial matrix segment spans residues 18–85 (VQTKALSKAT…EWGPRRPVHG (68 aa)). Residues 86–108 (KGDVAFITKGVFLGLGISFGLFG) form a helical membrane-spanning segment. Over 109–151 (LVRLLANPETPKTMNREWQLKSDEYLKSKNANPWGGYSQVQSK) the chain is Mitochondrial intermembrane.

It belongs to the cytochrome c oxidase IV family. As to quaternary structure, component of the cytochrome c oxidase (complex IV, CIV), a multisubunit enzyme composed of 12 subunits. The complex is composed of a catalytic core of 3 subunits COX1, COX2 and COX3, encoded in the mitochondrial DNA, and 9 supernumerary subunits COX4, COX5A (or COX5B), COX6, COX7, COX8, COX9, COX12, COX13 and COX26, which are encoded in the nuclear genome. COX5A is the predominant subunit V during aerobic/normoxic growth, it gets replaced by COX5B under anaerobic/hypoxic conditions. The complex exists as a monomer or a dimer and forms supercomplexes (SCs) in the inner mitochondrial membrane with a dimer of ubiquinol-cytochrome c oxidoreductase (cytochrome b-c1 complex, complex III, CIII), resulting in 2 different assemblies (supercomplexes III(2)IV and III(2)IV(2)).

It localises to the mitochondrion inner membrane. It participates in energy metabolism; oxidative phosphorylation. Its function is as follows. Component of the cytochrome c oxidase, the last enzyme in the mitochondrial electron transport chain which drives oxidative phosphorylation. The respiratory chain contains 3 multisubunit complexes succinate dehydrogenase (complex II, CII), ubiquinol-cytochrome c oxidoreductase (cytochrome b-c1 complex, complex III, CIII) and cytochrome c oxidase (complex IV, CIV), that cooperate to transfer electrons derived from NADH and succinate to molecular oxygen, creating an electrochemical gradient over the inner membrane that drives transmembrane transport and the ATP synthase. Cytochrome c oxidase is the component of the respiratory chain that catalyzes the reduction of oxygen to water. Electrons originating from reduced cytochrome c in the intermembrane space (IMS) are transferred via the dinuclear copper A center (CU(A)) of COX2 and heme A of COX1 to the active site in COX1, a binuclear center (BNC) formed by heme A3 and copper B (CU(B)). The BNC reduces molecular oxygen to 2 water molecules using 4 electrons from cytochrome c in the IMS and 4 protons from the mitochondrial matrix. The polypeptide is Cytochrome c oxidase subunit 5B, mitochondrial (COX5B) (Saccharomyces cerevisiae (strain ATCC 204508 / S288c) (Baker's yeast)).